Reading from the N-terminus, the 352-residue chain is 3-isopropylmalate dehydrogenase (352 aa).

NAD(+) is bound at residue 76–89 (GPKWENLPHEHKPE). Arg-96, Arg-106, Arg-134, and Asp-219 together coordinate substrate. Residues Asp-219, Asp-243, and Asp-247 each contribute to the Mg(2+) site. 276-288 (GSAPDIAGQNKAN) lines the NAD(+) pocket.

It belongs to the isocitrate and isopropylmalate dehydrogenases family. LeuB type 1 subfamily. Homodimer. Requires Mg(2+) as cofactor. Mn(2+) serves as cofactor.

Its subcellular location is the cytoplasm. The enzyme catalyses (2R,3S)-3-isopropylmalate + NAD(+) = 4-methyl-2-oxopentanoate + CO2 + NADH. The protein operates within amino-acid biosynthesis; L-leucine biosynthesis; L-leucine from 3-methyl-2-oxobutanoate: step 3/4. Its function is as follows. Catalyzes the oxidation of 3-carboxy-2-hydroxy-4-methylpentanoate (3-isopropylmalate) to 3-carboxy-4-methyl-2-oxopentanoate. The product decarboxylates to 4-methyl-2 oxopentanoate. The protein is 3-isopropylmalate dehydrogenase of Chlorobium chlorochromatii (strain CaD3).